The chain runs to 449 residues: Glucose-6-phosphate isomerase (449 aa).

Catalysis depends on glutamate 291, which acts as the Proton donor. Active-site residues include histidine 312 and lysine 426.

It belongs to the GPI family.

The protein localises to the cytoplasm. It carries out the reaction alpha-D-glucose 6-phosphate = beta-D-fructose 6-phosphate. The protein operates within carbohydrate biosynthesis; gluconeogenesis. Its pathway is carbohydrate degradation; glycolysis; D-glyceraldehyde 3-phosphate and glycerone phosphate from D-glucose: step 2/4. In terms of biological role, catalyzes the reversible isomerization of glucose-6-phosphate to fructose-6-phosphate. The sequence is that of Glucose-6-phosphate isomerase from Streptococcus pneumoniae (strain ATCC BAA-255 / R6).